We begin with the raw amino-acid sequence, 393 residues long: uncharacterized protein (393 aa).

8 consecutive transmembrane segments (helical) span residues 15-35 (IVAFSFFLVFLIVISVIVTIF), 56-76 (WGWIFVVILGFLVSVLWNVII), 86-106 (FYASWWEWLLFGFVVQFFQIV), 131-151 (AVLIVTSTGAFWNLSQALITW), 176-196 (LSLTGMIFDVVVAILFIVIAF), 253-273 (LLANMVVAIVSYFSLFGVFMI), 289-309 (LIDLFNITNIAVTASNFIPVA), and 349-369 (VYLPAIFTGICFVVWIVQVIW).

The protein resides in the cell membrane. This is an uncharacterized protein from Mycoplasma genitalium (strain ATCC 33530 / DSM 19775 / NCTC 10195 / G37) (Mycoplasmoides genitalium).